The chain runs to 225 residues: Small ribosomal subunit protein mS26 (225 aa).

It belongs to the mitochondrion-specific ribosomal protein mS26 family. Component of the mitochondrial ribosome small subunit (28S) which comprises a 12S rRNA and about 30 distinct proteins.

The protein resides in the mitochondrion. In Drosophila melanogaster (Fruit fly), this protein is Small ribosomal subunit protein mS26 (mRpS26).